The primary structure comprises 266 residues: MGSASEDLLVTLQILPGFFSNCLFLALYDSVVLVKRVVALLSRSRSAGCGEWRRMLTSEGLRSIWNSFLLDAHKQVKLGCEAPNSKVVKVPDGPRWSSTVVPCGSRIQTGGECRLLDFESSDRPLVVNFGSATUPPFISHLPAFRQLVEDFSDVADFLLVYIDEAHPSDGWVAPQMGACSFSFRKHQNLEERIGAARKLIEHFSLPPQCQLVADCMDNNANVAYGVANERVCIVHQRKIAYLGGKGPFFYSLKDVRQWLELSYGRR.

Residues 1 to 13 (MGSASEDLLVTLQ) lie on the Lumenal side of the membrane. The helical; Signal-anchor for type III membrane protein transmembrane segment at 14 to 34 (ILPGFFSNCLFLALYDSVVLV) threads the bilayer. Residues 35-266 (KRVVALLSRS…QWLELSYGRR (232 aa)) lie on the Cytoplasmic side of the membrane. Selenocysteine 134 is a catalytic residue. Position 134 (selenocysteine 134) is a non-standard amino acid, selenocysteine.

The protein belongs to the iodothyronine deiodinase family. In terms of assembly, predominantly monomer. Can form homodimers but homodimerization is not essential for enzyme activity.

It localises to the endoplasmic reticulum membrane. It catalyses the reaction 3,3',5-triiodo-L-thyronine + iodide + A + H(+) = L-thyroxine + AH2. It carries out the reaction 3,3'-diiodo-L-thyronine + iodide + A + H(+) = 3,3',5'-triiodo-L-thyronine + AH2. The catalysed reaction is 3'-iodo-L-thyronine + iodide + A + H(+) = 3',5'-diiodo-L-thyronine + AH2. Its activity is regulated as follows. Not inhibited by N(6)-propylthiouracil. In terms of biological role, plays a crucial role in the metabolism of thyroid hormones (TH) and has specific roles in TH activation and inactivation by deiodination. Catalyzes the conversion of T4 (L-thyroxine/3,5,3',5'-tetraiodothyronine) to T3 (3,5,3'-triiodothyronine) and rT3 (3,3',5'-triiodothyronine) to T2 (3,3'-diiodothyronine) via outer-ring deiodination (ORD). Catalyzes the conversion 3',5'-T2 (3,5-diiodothyronine) to 3-T1 (3-monoiodothyronine) via ORD. In Fundulus heteroclitus (Killifish), this protein is Type II iodothyronine deiodinase (dio2).